Reading from the N-terminus, the 556-residue chain is Jerky protein homolog (556 aa).

The 52-residue stretch at 11 to 62 (RGEKRKRVVLTLKEKIDICTRLEKGESRKALMQEYNVGMSTLYDIRAHKAQL) folds into the HTH psq-type domain. DNA-binding regions (H-T-H motif) lie at residues 38 to 58 (RKALMQEYNVGMSTLYDIRAH) and 110 to 142 (PMLIEKAKDFYEQMQLTEPCVFSGGWLWRFKAR). Residues 77–149 (QRRTLHTPKL…KARHGIKKLD (73 aa)) enclose the HTH CENPB-type domain. The 170-residue stretch at 213 to 382 (KDRLTVLMCA…VPSHVFRRAW (170 aa)) folds into the DDE-1 domain. S414 bears the Phosphoserine mark. The segment at 439-482 (SWGVAGREAEGGRPPAATSPAEVVWSSEKTPKADQDGRGDPGEG) is disordered. The segment covering 467-479 (KTPKADQDGRGDP) has biased composition (basic and acidic residues).

Belongs to the tigger transposable element derived protein family. In terms of tissue distribution, expressed ubiquitously.

The protein resides in the nucleus. Its function is as follows. May bind DNA. In Homo sapiens (Human), this protein is Jerky protein homolog.